The sequence spans 114 residues: Monothiol glutaredoxin-S8 (114 aa).

One can recognise a Glutaredoxin domain in the interval methionine 1–tryptophan 113. Cysteine 21 is a [2Fe-2S] cluster binding site.

It belongs to the glutaredoxin family. CC-type subfamily.

It is found in the cytoplasm. In terms of biological role, may only reduce GSH-thiol disulfides, but not protein disulfides. This chain is Monothiol glutaredoxin-S8 (GRXS8), found in Oryza sativa subsp. japonica (Rice).